The following is a 640-amino-acid chain: Dextranase (640 aa).

The N-terminal stretch at 1–32 (MPGTGLGRLAKRMTAAAAVFFISTSAVLPAQA) is a signal peptide. A propeptide spanning residues 33–49 (ATAPAAAPPGVPAALKA) is cleaved from the precursor. A disordered region spans residues 248–269 (EQKERLVPTEESGSIHYPEPGE).

The protein belongs to the glycosyl hydrolase 49 family.

It localises to the secreted. The enzyme catalyses Endohydrolysis of (1-&gt;6)-alpha-D-glucosidic linkages in dextran.. Functionally, efficiently decomposes water-insoluble glucan as well as dextran. In Arthrobacter sp. (strain CB-8), this protein is Dextranase.